A 1301-amino-acid polypeptide reads, in one-letter code: DNA-directed RNA polymerase subunit beta (1301 aa).

This sequence belongs to the RNA polymerase beta chain family. As to quaternary structure, the RNAP catalytic core consists of 2 alpha, 1 beta, 1 beta' and 1 omega subunit. When a sigma factor is associated with the core the holoenzyme is formed, which can initiate transcription.

The enzyme catalyses RNA(n) + a ribonucleoside 5'-triphosphate = RNA(n+1) + diphosphate. Its function is as follows. DNA-dependent RNA polymerase catalyzes the transcription of DNA into RNA using the four ribonucleoside triphosphates as substrates. This chain is DNA-directed RNA polymerase subunit beta, found in Chlorobium luteolum (strain DSM 273 / BCRC 81028 / 2530) (Pelodictyon luteolum).